Reading from the N-terminus, the 23-residue chain is Septenin 2d (23 aa).

Expressed in skin glands.

It localises to the secreted. In terms of biological role, may act as an antimicrobial peptide. The sequence is that of Septenin 2d from Osteopilus septentrionalis (Cuban treefrog).